We begin with the raw amino-acid sequence, 406 residues long: Protein transport protein HofC homolog (406 aa).

Transmembrane regions (helical) follow at residues 167–187 (MVLGISLLLTLALLLFIVPQF), 214–234 (QNIGILLFFVLSFFLFYYFYL), and 379–399 (MMVIIGSLIGIIMMGMYLPIF).

Belongs to the GSP F family.

Its subcellular location is the cell inner membrane. This chain is Protein transport protein HofC homolog (hofC), found in Haemophilus influenzae (strain ATCC 51907 / DSM 11121 / KW20 / Rd).